A 301-amino-acid chain; its full sequence is MLGRVTGKVLAYIALTKPRVIELLLVATIPAMLLADRGNVDIALILSTLFGGWMGAASANSLNCVVDADIDKVMKRTARRPLARDAVPTSHAFVFGMTLGVASFLWLWWRANLLAGCLVVLTIAFYVLVYTMVLKRRTWQNVVWGGAAGCMPVMVGWSAVTGSLSWQPIVLFLVIFFWTPPHTWALAMRYKEDYKAAGVPMLPVIATEEHVTKQILLYSWAMVITSLTLVPAAGVVYAAVTLVAGAWFLLMAHQLYRSVRGGAAVKPLRLFLQSNNYLAVVFVGLAVDSVLGLQTVGSLLS.

9 helical membrane passes run 9–29 (VLAY…VATI), 42–62 (IALI…ANSL), 89–109 (TSHA…WLWW), 113–133 (LLAG…YTMV), 142–162 (VVWG…AVTG), 168–188 (PIVL…ALAM), 211–231 (VTKQ…TLVP), 232–252 (AAGV…LLMA), and 280–300 (VVFV…GSLL).

This sequence belongs to the UbiA prenyltransferase family. Protoheme IX farnesyltransferase subfamily.

It is found in the cell membrane. The enzyme catalyses heme b + (2E,6E)-farnesyl diphosphate + H2O = Fe(II)-heme o + diphosphate. It functions in the pathway porphyrin-containing compound metabolism; heme O biosynthesis; heme O from protoheme: step 1/1. In terms of biological role, converts heme B (protoheme IX) to heme O by substitution of the vinyl group on carbon 2 of heme B porphyrin ring with a hydroxyethyl farnesyl side group. This Rhodococcus jostii (strain RHA1) protein is Protoheme IX farnesyltransferase.